We begin with the raw amino-acid sequence, 429 residues long: GTPase Obg (429 aa).

Residues 1–158 (MFADSAKIFI…LNVTLELKVI (158 aa)) form the Obg domain. The OBG-type G domain occupies 159 to 333 (ADVGLVGFPN…LLYYVSDLLK (175 aa)). Residues 165–172 (GFPNVGKS), 190–194 (FTTLN), 212–215 (DIPG), 282–285 (NKTD), and 314–316 (SAV) contribute to the GTP site. Residues serine 172 and threonine 192 each contribute to the Mg(2+) site. The region spanning 350-429 (ENLVMSEPYT…MYGLEFDYYK (80 aa)) is the OCT domain.

The protein belongs to the TRAFAC class OBG-HflX-like GTPase superfamily. OBG GTPase family. Monomer. Mg(2+) is required as a cofactor.

It localises to the cytoplasm. Functionally, an essential GTPase which binds GTP, GDP and possibly (p)ppGpp with moderate affinity, with high nucleotide exchange rates and a fairly low GTP hydrolysis rate. Plays a role in control of the cell cycle, stress response, ribosome biogenesis and in those bacteria that undergo differentiation, in morphogenesis control. This is GTPase Obg from Lachnoclostridium phytofermentans (strain ATCC 700394 / DSM 18823 / ISDg) (Clostridium phytofermentans).